The primary structure comprises 71 residues: UPF0346 protein BCE_2336 (71 aa).

Belongs to the UPF0346 family.

The protein is UPF0346 protein BCE_2336 of Bacillus cereus (strain ATCC 10987 / NRS 248).